Consider the following 164-residue polypeptide: SsrA-binding protein (164 aa).

The segment at 141-164 (KLHDKRQDEKQKSIKREINSALKR) is disordered. The segment covering 145 to 158 (KRQDEKQKSIKREI) has biased composition (basic and acidic residues).

Belongs to the SmpB family.

It localises to the cytoplasm. Required for rescue of stalled ribosomes mediated by trans-translation. Binds to transfer-messenger RNA (tmRNA), required for stable association of tmRNA with ribosomes. tmRNA and SmpB together mimic tRNA shape, replacing the anticodon stem-loop with SmpB. tmRNA is encoded by the ssrA gene; the 2 termini fold to resemble tRNA(Ala) and it encodes a 'tag peptide', a short internal open reading frame. During trans-translation Ala-aminoacylated tmRNA acts like a tRNA, entering the A-site of stalled ribosomes, displacing the stalled mRNA. The ribosome then switches to translate the ORF on the tmRNA; the nascent peptide is terminated with the 'tag peptide' encoded by the tmRNA and targeted for degradation. The ribosome is freed to recommence translation, which seems to be the essential function of trans-translation. This chain is SsrA-binding protein, found in Prochlorococcus marinus (strain MIT 9215).